We begin with the raw amino-acid sequence, 122 residues long: Large ribosomal subunit protein uL24 (122 aa).

The tract at residues 43-64 is disordered; it reads IRKHHRRDMPTPQGGTTKGGII.

Belongs to the universal ribosomal protein uL24 family. Part of the 50S ribosomal subunit.

Functionally, one of two assembly initiator proteins, it binds directly to the 5'-end of the 23S rRNA, where it nucleates assembly of the 50S subunit. Its function is as follows. One of the proteins that surrounds the polypeptide exit tunnel on the outside of the subunit. The sequence is that of Large ribosomal subunit protein uL24 from Cutibacterium acnes (strain DSM 16379 / KPA171202) (Propionibacterium acnes).